The primary structure comprises 92 residues: Small ribosomal subunit protein uS19 (92 aa).

This sequence belongs to the universal ribosomal protein uS19 family.

Functionally, protein S19 forms a complex with S13 that binds strongly to the 16S ribosomal RNA. In Borrelia recurrentis (strain A1), this protein is Small ribosomal subunit protein uS19.